A 215-amino-acid polypeptide reads, in one-letter code: Ribose-5-phosphate isomerase A (215 aa).

Substrate-binding positions include 26–29 (TGST), 79–82 (DGAD), and 92–95 (KGGG). Residue Glu-101 is the Proton acceptor of the active site. Lys-119 is a binding site for substrate.

It belongs to the ribose 5-phosphate isomerase family. In terms of assembly, homodimer.

The enzyme catalyses aldehydo-D-ribose 5-phosphate = D-ribulose 5-phosphate. Its pathway is carbohydrate degradation; pentose phosphate pathway; D-ribose 5-phosphate from D-ribulose 5-phosphate (non-oxidative stage): step 1/1. In terms of biological role, catalyzes the reversible conversion of ribose-5-phosphate to ribulose 5-phosphate. The sequence is that of Ribose-5-phosphate isomerase A from Xylella fastidiosa (strain M12).